A 534-amino-acid chain; its full sequence is C-type lectin domain family 18 member A (534 aa).

The segment at 47–88 (GALPVAGKPEPMARSLASAPVSPWHHMDRGSTTPAKARSHSA) is disordered. The SCP domain maps to 139–270 (LTAHNRLRSR…EAMEAFVCAY (132 aa)). In terms of domain architecture, EGF-like spans 316–349 (PRNPCRMSCRNLGHLNISTCRCHCQPGYTGRYCQ). Cystine bridges form between Cys324/Cys337, Cys339/Cys348, Cys415/Cys520, and Cys496/Cys512. In terms of domain architecture, C-type lectin spans 394 to 521 (IDGDCFMVSP…CKTRNRYICQ (128 aa)).

Its subcellular location is the secreted. This chain is C-type lectin domain family 18 member A (Clec18a), found in Mus musculus (Mouse).